The primary structure comprises 1051 residues: Protein ALWAYS EARLY 2 (1051 aa).

2 stretches are compositionally biased toward basic residues: residues 1–11 (MAPVRKSRSVN) and 27–36 (SKKNKLRKKL). The interval 1 to 37 (MAPVRKSRSVNKRFTNETSPRKDAGKSKKNKLRKKLS) is disordered. Residues 39 to 93 (KLGPQWTRLELERFYDAYRKHGQEWRRVAAAIRNSRSVDMVEALFNMNRAYLSLP) enclose the SANT domain. Disordered stretches follow at residues 114–158 (EGSG…IGSP), 170–210 (ANGT…RKQF), 225–293 (TDAS…KDTT), 323–375 (AECN…TSGA), 397–605 (SELS…SSRS), and 948–981 (SIEHHHNPSPSNGSEPVANNDLNSQDGSEKNAQM). A compositionally biased stretch (basic and acidic residues) spans 120-130 (GEGHDASEVPR). Residues 131–140 (KQQKRKRAKP) are compositionally biased toward basic residues. Residues 279–293 (ESSRERKLDSDKDTT) show a composition bias toward basic and acidic residues. Residues 323 to 332 (AECNDSDDNG) show a composition bias toward acidic residues. Basic and acidic residues-rich tracts occupy residues 350 to 372 (AAIEASREKYSPRSPKKRDDKHT) and 403 to 417 (LKEERTEYDMDEKSS). Polar residues predominate over residues 560–574 (KQVSDSGPTSLSQKP). The span at 586-597 (LQEKAKSSETTH) shows a compositional bias: basic and acidic residues. The segment covering 967–981 (NDLNSQDGSEKNAQM) has biased composition (polar residues).

Interacts with SNL1 (via PAH3). Expressed ubiquitously in vegetative and reproductive tissues.

The protein localises to the nucleus. The sequence is that of Protein ALWAYS EARLY 2 (ALY2) from Arabidopsis thaliana (Mouse-ear cress).